Here is a 156-residue protein sequence, read N- to C-terminus: MPRKGPAPKRPVVADPVYGAPIVSQLVNKILLDGKKGLAERIVYDALAGVAAKNGQDAVVTLKKALDNVRPALEVRSRRVGGSTYQVPIEVKPHRANTLALRWLTTYAKSRREKTMTERLTNEILDASNGLGAAVKRREDTHKMAESNKAFAHYRW.

This sequence belongs to the universal ribosomal protein uS7 family. As to quaternary structure, part of the 30S ribosomal subunit. Contacts proteins S9 and S11.

Its function is as follows. One of the primary rRNA binding proteins, it binds directly to 16S rRNA where it nucleates assembly of the head domain of the 30S subunit. Is located at the subunit interface close to the decoding center, probably blocks exit of the E-site tRNA. This is Small ribosomal subunit protein uS7 from Clavibacter sepedonicus (Clavibacter michiganensis subsp. sepedonicus).